The sequence spans 157 residues: MEALRRAHEVALRLLLCRPWASRAAARPKPSASEVLTRHLLQRRLPHWTSFCVPYSAVRNDQFGLSHFNWPVQGANYHVLRTGCFPFIKYHCSKAPWQDLARQNRFFTALKVVNLGIPTLLYGLGSWLFARVTETVHTSYGPITVYFLNKEDEGAMY.

Positions 1-26 (MEALRRAHEVALRLLLCRPWASRAAA) are cleaved as a signal peptide.

It localises to the secreted. This is an uncharacterized protein from Homo sapiens (Human).